The chain runs to 142 residues: Hemoglobin subunit alpha-1 (142 aa).

The Globin domain maps to 2 to 142 (VLSADDKSNV…VSTVLTSKYR (141 aa)). Residue His-59 participates in O2 binding. His-88 provides a ligand contact to heme b.

The protein belongs to the globin family. As to quaternary structure, heterotetramer of two alpha chains and two beta chains. As to expression, red blood cells.

In terms of biological role, involved in oxygen transport from the lung to the various peripheral tissues. Functionally, hemopressin acts as an antagonist peptide of the cannabinoid receptor CNR1. Hemopressin-binding efficiently blocks cannabinoid receptor CNR1 and subsequent signaling. The polypeptide is Hemoglobin subunit alpha-1 (HBA1) (Equus quagga burchellii (Burchell's zebra)).